The sequence spans 104 residues: Large ribosomal subunit protein bL21 (104 aa).

Belongs to the bacterial ribosomal protein bL21 family. As to quaternary structure, part of the 50S ribosomal subunit. Contacts protein L20.

This protein binds to 23S rRNA in the presence of protein L20. In Kosmotoga olearia (strain ATCC BAA-1733 / DSM 21960 / TBF 19.5.1), this protein is Large ribosomal subunit protein bL21.